Here is a 1086-residue protein sequence, read N- to C-terminus: 1,2-beta-oligoglucan phosphorylase (1086 aa).

Residue Asp741 is the Proton donor of the active site.

This sequence belongs to the glycosyl hydrolase 94 family. As to quaternary structure, monomer.

The catalysed reaction is [(1-&gt;2)-beta-D-glucosyl](n) + phosphate = [(1-&gt;2)-beta-D-glucosyl](n-1) + alpha-D-glucose 1-phosphate. In terms of biological role, catalyzes the reversible phosphorolysis of beta-(1-&gt;2)-D-glucans. The minimum length of the substrate for the phosphorolytic reaction is 3 D-glucose units. This is 1,2-beta-oligoglucan phosphorylase from Listeria innocua serovar 6a (strain ATCC BAA-680 / CLIP 11262).